We begin with the raw amino-acid sequence, 183 residues long: uncharacterized protein (183 aa).

It to M.leprae ML2442.

This is an uncharacterized protein from Mycobacterium tuberculosis (strain CDC 1551 / Oshkosh).